A 263-amino-acid polypeptide reads, in one-letter code: Killer cell lectin-like receptor 4 (263 aa).

Over Met-1–Gln-44 the chain is Cytoplasmic. The helical; Signal-anchor for type II membrane protein transmembrane segment at Leu-45–Met-65 threads the bilayer. The Extracellular portion of the chain corresponds to Thr-66 to His-263. 2 N-linked (GlcNAc...) asparagine glycosylation sites follow: Asn-87 and Asn-104. Positions Gly-139–Leu-258 constitute a C-type lectin domain. 4 disulfide bridges follow: Cys-146–Cys-151, Cys-164–Cys-252, Cys-168–Cys-254, and Cys-233–Cys-246. N-linked (GlcNAc...) asparagine glycans are attached at residues Asn-170 and Asn-222.

Homodimer; disulfide-linked. Interacts with the adapter protein TYROBP/DAP12; the interaction leads to natural killer cell activation.

It is found in the cell membrane. Functionally, receptor on natural killer (NK) cells for class I MHC. The protein is Killer cell lectin-like receptor 4 (Klra4) of Mus musculus (Mouse).